We begin with the raw amino-acid sequence, 487 residues long: Probable cobyric acid synthase (487 aa).

The 186-residue stretch at 246–431 (LVRIAVIRLP…LHGLFMVPAA (186 aa)) folds into the GATase cobBQ-type domain. The active-site Nucleophile is Cys-325. The active site involves His-423.

This sequence belongs to the CobB/CobQ family. CobQ subfamily.

The protein operates within cofactor biosynthesis; adenosylcobalamin biosynthesis. In terms of biological role, catalyzes amidations at positions B, D, E, and G on adenosylcobyrinic A,C-diamide. NH(2) groups are provided by glutamine, and one molecule of ATP is hydrogenolyzed for each amidation. This is Probable cobyric acid synthase from Methanosphaerula palustris (strain ATCC BAA-1556 / DSM 19958 / E1-9c).